The chain runs to 310 residues: E3 ubiquitin-protein ligase CSU1 (310 aa).

The RING-type 1; degenerate zinc finger occupies 43–67 (CSLCLKPFIDPMCCHKGHVFCRECI). A coiled-coil region spans residues 75 to 95 (KKDIQRRLAAHSSQKKQDKDE). Residues 110–138 (EFDQQNHSAMPRNSDKNHNEDKNGFHGAN) are disordered. Over residues 122–133 (NSDKNHNEDKNG) the composition is skewed to basic and acidic residues. The RING-type 2 zinc-finger motif lies at 221–263 (CPSCKVTLTNTMSLVALSSCGHVFCKKCAEKFMPVDKVCLVCD).

Belongs to the NOSIP family.

It localises to the nucleus. The protein resides in the nucleus speckle. The catalysed reaction is S-ubiquitinyl-[E2 ubiquitin-conjugating enzyme]-L-cysteine + [acceptor protein]-L-lysine = [E2 ubiquitin-conjugating enzyme]-L-cysteine + N(6)-ubiquitinyl-[acceptor protein]-L-lysine.. It participates in protein modification; protein ubiquitination. RING-finger E3 ubiquitin-protein ligase that plays an major role in maintaining COP1 homeostasis in darkness. Negatively regulates COP1 protein accumulation by targeting COP1 for ubiquitination and subsequent proteasomal degradation in dark-grown seedlings. Negatively regulates the accumulation of SPA1 protein in the dark. In Arabidopsis thaliana (Mouse-ear cress), this protein is E3 ubiquitin-protein ligase CSU1.